We begin with the raw amino-acid sequence, 92 residues long: Small ribosomal subunit protein bS20 (92 aa).

Residues 1 to 25 (MANSAQARKRARQAAKANSHNSALR) are disordered.

Belongs to the bacterial ribosomal protein bS20 family.

Functionally, binds directly to 16S ribosomal RNA. This chain is Small ribosomal subunit protein bS20, found in Burkholderia mallei (strain NCTC 10247).